The chain runs to 284 residues: Bifunctional protein FolD (284 aa).

NADP(+) contacts are provided by residues 163 to 165 (GRS) and S188.

The protein belongs to the tetrahydrofolate dehydrogenase/cyclohydrolase family. Homodimer.

The enzyme catalyses (6R)-5,10-methylene-5,6,7,8-tetrahydrofolate + NADP(+) = (6R)-5,10-methenyltetrahydrofolate + NADPH. The catalysed reaction is (6R)-5,10-methenyltetrahydrofolate + H2O = (6R)-10-formyltetrahydrofolate + H(+). It functions in the pathway one-carbon metabolism; tetrahydrofolate interconversion. In terms of biological role, catalyzes the oxidation of 5,10-methylenetetrahydrofolate to 5,10-methenyltetrahydrofolate and then the hydrolysis of 5,10-methenyltetrahydrofolate to 10-formyltetrahydrofolate. The protein is Bifunctional protein FolD of Lactococcus lactis subsp. lactis (strain IL1403) (Streptococcus lactis).